A 64-amino-acid polypeptide reads, in one-letter code: Large ribosomal subunit protein bL35 (64 aa).

The tract at residues 1-55 (MPKMKSNKSVAARFKLTGSGQLKRTRPGKRHKLSKRSSQQKRNLSKQPLVDQGQV) is disordered. Residues 23–39 (KRTRPGKRHKLSKRSSQ) are compositionally biased toward basic residues.

The protein belongs to the bacterial ribosomal protein bL35 family.

The sequence is that of Large ribosomal subunit protein bL35 from Chlamydia muridarum (strain MoPn / Nigg).